The following is a 284-amino-acid chain: Bifunctional protein FolD (284 aa).

NADP(+)-binding positions include 164–166 (GTS) and Ile-230.

This sequence belongs to the tetrahydrofolate dehydrogenase/cyclohydrolase family. In terms of assembly, homodimer.

It catalyses the reaction (6R)-5,10-methylene-5,6,7,8-tetrahydrofolate + NADP(+) = (6R)-5,10-methenyltetrahydrofolate + NADPH. The enzyme catalyses (6R)-5,10-methenyltetrahydrofolate + H2O = (6R)-10-formyltetrahydrofolate + H(+). Its pathway is one-carbon metabolism; tetrahydrofolate interconversion. Its function is as follows. Catalyzes the oxidation of 5,10-methylenetetrahydrofolate to 5,10-methenyltetrahydrofolate and then the hydrolysis of 5,10-methenyltetrahydrofolate to 10-formyltetrahydrofolate. The chain is Bifunctional protein FolD from Mycoplasma capricolum subsp. capricolum (strain California kid / ATCC 27343 / NCTC 10154).